The sequence spans 475 residues: Pyruvate kinase (475 aa).

Position 36 (arginine 36) interacts with substrate. 3 residues coordinate K(+): asparagine 38, serine 40, and aspartate 70. 38-41 (NFSH) provides a ligand contact to ATP. ATP-binding residues include arginine 77 and lysine 158. Glutamate 223 is a Mg(2+) binding site. The substrate site is built by glycine 246, aspartate 247, and threonine 279. Aspartate 247 contributes to the Mg(2+) binding site.

It belongs to the pyruvate kinase family. In terms of assembly, homotetramer. The cofactor is a divalent metal cation.

The enzyme catalyses pyruvate + ATP = phosphoenolpyruvate + ADP + H(+). Its pathway is carbohydrate degradation; glycolysis; pyruvate from D-glyceraldehyde 3-phosphate: step 5/5. The chain is Pyruvate kinase (pki) from Thermococcus litoralis (strain ATCC 51850 / DSM 5473 / JCM 8560 / NS-C).